Reading from the N-terminus, the 546-residue chain is (+)-epi-alpha-bisabolol synthase (546 aa).

Positions 297, 301, 441, 445, and 449 each coordinate Mg(2+). Positions 297-301 (DDIYD) match the DDXXD motif motif.

Belongs to the terpene synthase family. The cofactor is Mg(2+).

The enzyme catalyses (2E,6E)-farnesyl diphosphate + H2O = (+)-epi-alpha-bisabolol + diphosphate. It functions in the pathway secondary metabolite biosynthesis; terpenoid biosynthesis. Sesquiterpene synthase involved in the biosynthesis of (+)-epi-alpha-bisabolol, a precursor of the natural sweetner hernandulcin. The sequence is that of (+)-epi-alpha-bisabolol synthase from Phyla dulcis (Aztec sweet herb).